Here is a 479-residue protein sequence, read N- to C-terminus: Adenosylhomocysteinase (479 aa).

Residues threonine 65, aspartate 145, and glutamate 205 each coordinate substrate. 206-208 (TTT) lines the NAD(+) pocket. Lysine 235 and aspartate 239 together coordinate substrate. NAD(+) contacts are provided by residues asparagine 240, 269 to 274 (GYGDVG), glutamate 292, asparagine 327, 348 to 350 (IGH), and asparagine 393.

It belongs to the adenosylhomocysteinase family. It depends on NAD(+) as a cofactor.

It is found in the cytoplasm. The catalysed reaction is S-adenosyl-L-homocysteine + H2O = L-homocysteine + adenosine. It participates in amino-acid biosynthesis; L-homocysteine biosynthesis; L-homocysteine from S-adenosyl-L-homocysteine: step 1/1. Its function is as follows. May play a key role in the regulation of the intracellular concentration of adenosylhomocysteine. This chain is Adenosylhomocysteinase, found in Herminiimonas arsenicoxydans.